The primary structure comprises 335 residues: Ketol-acid reductoisomerase (NADP(+)) (335 aa).

A KARI N-terminal Rossmann domain is found at 5–185; that stretch reads SKIYTDKDSN…GATRAGVIPT (181 aa). NADP(+) contacts are provided by residues 28–31, S56, and 86–89; these read YGSQ and DMVQ. H111 is a catalytic residue. G137 serves as a coordination point for NADP(+). Residues 186 to 331 form the KARI C-terminal knotted domain; sequence TFKEETETDL…NQLKDLIQKG (146 aa). Mg(2+) is bound by residues D194, E198, E230, and E234. A substrate-binding site is contributed by S255.

It belongs to the ketol-acid reductoisomerase family. Mg(2+) is required as a cofactor.

It carries out the reaction (2R)-2,3-dihydroxy-3-methylbutanoate + NADP(+) = (2S)-2-acetolactate + NADPH + H(+). The enzyme catalyses (2R,3R)-2,3-dihydroxy-3-methylpentanoate + NADP(+) = (S)-2-ethyl-2-hydroxy-3-oxobutanoate + NADPH + H(+). It functions in the pathway amino-acid biosynthesis; L-isoleucine biosynthesis; L-isoleucine from 2-oxobutanoate: step 2/4. Its pathway is amino-acid biosynthesis; L-valine biosynthesis; L-valine from pyruvate: step 2/4. Involved in the biosynthesis of branched-chain amino acids (BCAA). Catalyzes an alkyl-migration followed by a ketol-acid reduction of (S)-2-acetolactate (S2AL) to yield (R)-2,3-dihydroxy-isovalerate. In the isomerase reaction, S2AL is rearranged via a Mg-dependent methyl migration to produce 3-hydroxy-3-methyl-2-ketobutyrate (HMKB). In the reductase reaction, this 2-ketoacid undergoes a metal-dependent reduction by NADPH to yield (R)-2,3-dihydroxy-isovalerate. The sequence is that of Ketol-acid reductoisomerase (NADP(+)) from Saccharolobus islandicus (strain M.16.27) (Sulfolobus islandicus).